A 510-amino-acid polypeptide reads, in one-letter code: Ribonuclease Y (510 aa).

Residues 2–22 traverse the membrane as a helical segment; it reads IYIIFSSIFAGFILGFLVRVF. The 61-residue stretch at 198–258 folds into the KH domain; that stretch reads TVASVELPND…IRKELAKRTL (61 aa). Residues 324–419 form the HD domain; sequence VLSHSKETAI…VQIADAISAS (96 aa).

The protein belongs to the RNase Y family.

Its subcellular location is the cell membrane. Functionally, endoribonuclease that initiates mRNA decay. The protein is Ribonuclease Y of Borreliella burgdorferi (strain ATCC 35210 / DSM 4680 / CIP 102532 / B31) (Borrelia burgdorferi).